The following is a 615-amino-acid chain: Protein translocase subunit SecD (615 aa).

Helical transmembrane passes span Tyr10 to Gly30, Gln452 to Tyr472, Leu477 to Leu497, Met504 to Ile524, Tyr546 to Tyr568, and Gly585 to Tyr605.

The protein belongs to the SecD/SecF family. SecD subfamily. As to quaternary structure, forms a complex with SecF. Part of the essential Sec protein translocation apparatus which comprises SecA, SecYEG and auxiliary proteins SecDF-YajC and YidC.

The protein resides in the cell inner membrane. In terms of biological role, part of the Sec protein translocase complex. Interacts with the SecYEG preprotein conducting channel. SecDF uses the proton motive force (PMF) to complete protein translocation after the ATP-dependent function of SecA. The sequence is that of Protein translocase subunit SecD from Salmonella choleraesuis (strain SC-B67).